A 298-amino-acid chain; its full sequence is uncharacterized protein (298 aa).

An HTH araC/xylS-type domain is found at 194 to 295; the sequence is KRLNTALIAI…QLSPSQYRKS (102 aa). DNA-binding regions (H-T-H motif) lie at residues 214–235 and 262–285; these read EQLA…QQHI and VLAI…KNYY.

This is an uncharacterized protein from Haemophilus influenzae (strain ATCC 51907 / DSM 11121 / KW20 / Rd).